Reading from the N-terminus, the 151-residue chain is SsrA-binding protein (151 aa).

The protein belongs to the SmpB family.

The protein resides in the cytoplasm. In terms of biological role, required for rescue of stalled ribosomes mediated by trans-translation. Binds to transfer-messenger RNA (tmRNA), required for stable association of tmRNA with ribosomes. tmRNA and SmpB together mimic tRNA shape, replacing the anticodon stem-loop with SmpB. tmRNA is encoded by the ssrA gene; the 2 termini fold to resemble tRNA(Ala) and it encodes a 'tag peptide', a short internal open reading frame. During trans-translation Ala-aminoacylated tmRNA acts like a tRNA, entering the A-site of stalled ribosomes, displacing the stalled mRNA. The ribosome then switches to translate the ORF on the tmRNA; the nascent peptide is terminated with the 'tag peptide' encoded by the tmRNA and targeted for degradation. The ribosome is freed to recommence translation, which seems to be the essential function of trans-translation. This Geotalea uraniireducens (strain Rf4) (Geobacter uraniireducens) protein is SsrA-binding protein.